The following is a 498-amino-acid chain: ATP synthase subunit beta, chloroplastic (498 aa).

172-179 (GGAGVGKT) lines the ATP pocket.

The protein belongs to the ATPase alpha/beta chains family. As to quaternary structure, F-type ATPases have 2 components, CF(1) - the catalytic core - and CF(0) - the membrane proton channel. CF(1) has five subunits: alpha(3), beta(3), gamma(1), delta(1), epsilon(1). CF(0) has four main subunits: a(1), b(1), b'(1) and c(9-12).

It localises to the plastid. It is found in the chloroplast thylakoid membrane. It catalyses the reaction ATP + H2O + 4 H(+)(in) = ADP + phosphate + 5 H(+)(out). Produces ATP from ADP in the presence of a proton gradient across the membrane. The catalytic sites are hosted primarily by the beta subunits. The sequence is that of ATP synthase subunit beta, chloroplastic from Trochodendron aralioides (Wheel tree).